Consider the following 203-residue polypeptide: ATP-dependent Clp protease proteolytic subunit (203 aa).

S103 serves as the catalytic Nucleophile. H128 is a catalytic residue.

Belongs to the peptidase S14 family. As to quaternary structure, fourteen ClpP subunits assemble into 2 heptameric rings which stack back to back to give a disk-like structure with a central cavity, resembling the structure of eukaryotic proteasomes.

It localises to the cytoplasm. It catalyses the reaction Hydrolysis of proteins to small peptides in the presence of ATP and magnesium. alpha-casein is the usual test substrate. In the absence of ATP, only oligopeptides shorter than five residues are hydrolyzed (such as succinyl-Leu-Tyr-|-NHMec, and Leu-Tyr-Leu-|-Tyr-Trp, in which cleavage of the -Tyr-|-Leu- and -Tyr-|-Trp bonds also occurs).. Its function is as follows. Cleaves peptides in various proteins in a process that requires ATP hydrolysis. Has a chymotrypsin-like activity. Plays a major role in the degradation of misfolded proteins. This is ATP-dependent Clp protease proteolytic subunit from Nitrosococcus oceani (strain ATCC 19707 / BCRC 17464 / JCM 30415 / NCIMB 11848 / C-107).